A 172-amino-acid polypeptide reads, in one-letter code: RNA pyrophosphohydrolase (172 aa).

A Nudix hydrolase domain is found at 6–149 (GYRPNVGIIL…KRDVYRMALK (144 aa)). The short motif at 38-59 (GGIKYGESPEQAMYRELMEEVG) is the Nudix box element.

This sequence belongs to the Nudix hydrolase family. RppH subfamily. It depends on a divalent metal cation as a cofactor.

Functionally, accelerates the degradation of transcripts by removing pyrophosphate from the 5'-end of triphosphorylated RNA, leading to a more labile monophosphorylated state that can stimulate subsequent ribonuclease cleavage. This chain is RNA pyrophosphohydrolase, found in Methylobacillus flagellatus (strain ATCC 51484 / DSM 6875 / VKM B-1610 / KT).